A 1067-amino-acid chain; its full sequence is Isoleucine--tRNA ligase (1067 aa).

The 'HIGH' region motif lies at 49–59 (PYVSGAIHLGT). The 'KMSKS' region signature appears at 625–629 (KMSKS). Lys-628 contributes to the ATP binding site.

This sequence belongs to the class-I aminoacyl-tRNA synthetase family. IleS type 2 subfamily. In terms of assembly, monomer. Zn(2+) is required as a cofactor.

The protein resides in the cytoplasm. The catalysed reaction is tRNA(Ile) + L-isoleucine + ATP = L-isoleucyl-tRNA(Ile) + AMP + diphosphate. Functionally, catalyzes the attachment of isoleucine to tRNA(Ile). As IleRS can inadvertently accommodate and process structurally similar amino acids such as valine, to avoid such errors it has two additional distinct tRNA(Ile)-dependent editing activities. One activity is designated as 'pretransfer' editing and involves the hydrolysis of activated Val-AMP. The other activity is designated 'posttransfer' editing and involves deacylation of mischarged Val-tRNA(Ile). This Pyrococcus abyssi (strain GE5 / Orsay) protein is Isoleucine--tRNA ligase.